Reading from the N-terminus, the 282-residue chain is Nucleotide-binding protein XAC2976 (282 aa).

An ATP-binding site is contributed by 5–12 (GLSGSGKS). 57 to 60 (DVRS) lines the GTP pocket.

Belongs to the RapZ-like family.

Functionally, displays ATPase and GTPase activities. This Xanthomonas axonopodis pv. citri (strain 306) protein is Nucleotide-binding protein XAC2976.